We begin with the raw amino-acid sequence, 291 residues long: Formamidopyrimidine-DNA glycosylase (291 aa).

The active-site Schiff-base intermediate with DNA is proline 2. Glutamate 3 functions as the Proton donor in the catalytic mechanism. Residue lysine 58 is the Proton donor; for beta-elimination activity of the active site. 3 residues coordinate DNA: histidine 100, arginine 123, and lysine 166. The FPG-type zinc finger occupies 257 to 291 (SVYGREGKECSRCGMHIVRIVQSGRSSFYCPQCQK). Arginine 281 serves as the catalytic Proton donor; for delta-elimination activity.

The protein belongs to the FPG family. As to quaternary structure, monomer. Zn(2+) is required as a cofactor.

It carries out the reaction Hydrolysis of DNA containing ring-opened 7-methylguanine residues, releasing 2,6-diamino-4-hydroxy-5-(N-methyl)formamidopyrimidine.. It catalyses the reaction 2'-deoxyribonucleotide-(2'-deoxyribose 5'-phosphate)-2'-deoxyribonucleotide-DNA = a 3'-end 2'-deoxyribonucleotide-(2,3-dehydro-2,3-deoxyribose 5'-phosphate)-DNA + a 5'-end 5'-phospho-2'-deoxyribonucleoside-DNA + H(+). Its function is as follows. Involved in base excision repair of DNA damaged by oxidation or by mutagenic agents. Acts as a DNA glycosylase that recognizes and removes damaged bases. Has a preference for oxidized purines, such as 7,8-dihydro-8-oxoguanine (8-oxoG). Has AP (apurinic/apyrimidinic) lyase activity and introduces nicks in the DNA strand. Cleaves the DNA backbone by beta-delta elimination to generate a single-strand break at the site of the removed base with both 3'- and 5'-phosphates. The polypeptide is Formamidopyrimidine-DNA glycosylase (Bartonella bacilliformis (strain ATCC 35685 / KC583 / Herrer 020/F12,63)).